The sequence spans 961 residues: Vitamin B12-dependent ribonucleotide reductase (961 aa).

The segment at 1 to 23 (MTETTSGPARGSRTKGTKATKGL) is disordered. Substrate contacts are provided by residues S143, 159-160 (AC), G188, 364-368 (NPCSE), and 554-558 (PTGTI). An intrachain disulfide couples C160 to C377. The Proton acceptor role is filled by N364. The active-site Cysteine radical intermediate is the C366. E368 functions as the Proton acceptor in the catalytic mechanism.

Belongs to the ribonucleoside diphosphate reductase class-2 family. As to quaternary structure, homotetramer. It depends on adenosylcob(III)alamin as a cofactor.

It carries out the reaction a 2'-deoxyribonucleoside 5'-diphosphate + [thioredoxin]-disulfide + H2O = a ribonucleoside 5'-diphosphate + [thioredoxin]-dithiol. Its function is as follows. Catalyzes the reduction of ribonucleotides to deoxyribonucleotides. May function to provide a pool of deoxyribonucleotide precursors for DNA repair during oxygen limitation and/or for immediate growth after restoration of oxygen. In Streptomyces clavuligerus, this protein is Vitamin B12-dependent ribonucleotide reductase (nrdJ).